Here is a 443-residue protein sequence, read N- to C-terminus: MKIGIINTKIRTVFSAFACMIAASLVCTMPARAVVEININKGVIEPLPIAITDFLSADQLGSNITSVIAADLERSGLFAPIDKGAFIEKISNPDAAPRFEDWKVINAQALVTGRITKQPDGRLKAEFRLWDTFGGQQMIGQQFFTTPDNWRRVAHIIADAIYERLTGDKGYFDTRVVFVDESGPAQKRVKRLAIMDQDGANVRFISDGRALSLTPRFSPNWQEVTYMSFEGGSPKVYLLQLETGQRELVGNFPGMTIAPRFSPDGQKVVMSLLQDDGSANIYTMDLRNRTTTRLTSSQAIDTGASYSPDGSQIVFTSDRGGRPQLYVMGADGSNPRRISMGDGSYSTPVWSPRGDLIAFTKQSQGQFSIGVMKTDGSGERLLTSGFHNEGPTWAPNGRVLMFFRKAAGAGGPKLFTIDLTGRNERQIQTPNFASDPAWSPLLE.

The signal sequence occupies residues 1 to 33; it reads MKIGIINTKIRTVFSAFACMIAASLVCTMPARA.

Belongs to the TolB family. The Tol-Pal system is composed of five core proteins: the inner membrane proteins TolA, TolQ and TolR, the periplasmic protein TolB and the outer membrane protein Pal. They form a network linking the inner and outer membranes and the peptidoglycan layer.

It is found in the periplasm. In terms of biological role, part of the Tol-Pal system, which plays a role in outer membrane invagination during cell division and is important for maintaining outer membrane integrity. In Brucella ovis (strain ATCC 25840 / 63/290 / NCTC 10512), this protein is Tol-Pal system protein TolB.